Consider the following 351-residue polypeptide: Glycerol-3-phosphate dehydrogenase [NAD(P)+] (351 aa).

NADPH is bound by residues Ser-18, Trp-19, Arg-38, and Lys-122. Positions 122, 153, and 155 each coordinate sn-glycerol 3-phosphate. Ala-157 provides a ligand contact to NADPH. Residues Lys-208, Asp-261, Ser-271, Arg-272, and Asn-273 each contribute to the sn-glycerol 3-phosphate site. Lys-208 acts as the Proton acceptor in catalysis. Arg-272 contacts NADPH. NADPH is bound at residue Glu-297.

The protein belongs to the NAD-dependent glycerol-3-phosphate dehydrogenase family.

It localises to the cytoplasm. The enzyme catalyses sn-glycerol 3-phosphate + NAD(+) = dihydroxyacetone phosphate + NADH + H(+). The catalysed reaction is sn-glycerol 3-phosphate + NADP(+) = dihydroxyacetone phosphate + NADPH + H(+). It functions in the pathway membrane lipid metabolism; glycerophospholipid metabolism. Functionally, catalyzes the reduction of the glycolytic intermediate dihydroxyacetone phosphate (DHAP) to sn-glycerol 3-phosphate (G3P), the key precursor for phospholipid synthesis. The sequence is that of Glycerol-3-phosphate dehydrogenase [NAD(P)+] from Bordetella bronchiseptica (strain ATCC BAA-588 / NCTC 13252 / RB50) (Alcaligenes bronchisepticus).